Consider the following 398-residue polypeptide: MISDLESLGIDFKDEGENYVPKKDYSGNLVAKYVFDSNGISTDNITLKDLSGHGYDGTMSGVSIKDDSELGKCAYFNGSASVNFNNQIIPKGNKTIIITFKKDSGTQSNGQYEFLIEQGSGQGESITSWSIRFDSYKTACLNNLYFCNDDSKINMLNSHPAVFNVCDGKKHTAIFNYYDNKTNNTYCDSLKAHVCSFDFNGGEYRTADNSIIGQKYVGYIKSIEIYDDVVEFNSISTGTSLNKNIDQLIIGQTDNLVATIMPEDVTDKSVIWSSSDPSIVAVDENGKITALKVGEVSITVTTNDGSNLSQTCMVAVIDTTIPDKACLNISMTNGQVKQYYVGMDLVNKFISWYKLRSAGSEEPFYEFDITQLSEPGILRHDYVVFNKISSFTVDDYVK.

Residues 240–306 enclose the BIG2 domain; that stretch reads SLNKNIDQLI…SITVTTNDGS (67 aa).

This is an uncharacterized protein from Clostridium acetobutylicum (strain ATCC 824 / DSM 792 / JCM 1419 / IAM 19013 / LMG 5710 / NBRC 13948 / NRRL B-527 / VKM B-1787 / 2291 / W).